The primary structure comprises 379 residues: Cytochrome b (379 aa).

4 helical membrane passes run 33-53 (FGSL…FLAM), 77-98 (WLIR…FIHV), 113-133 (WNIG…GYVL), and 178-198 (FFAF…VHLL). 2 residues coordinate heme b: His83 and His97. His182 and His196 together coordinate heme b. His201 is a binding site for a ubiquinone. 4 helical membrane-spanning segments follow: residues 226–246 (IKDL…ALFF), 288–308 (LGGV…PLLN), 320–340 (ITQT…WIGG), and 347–367 (FTTI…ILMP).

Belongs to the cytochrome b family. As to quaternary structure, the cytochrome bc1 complex contains 11 subunits: 3 respiratory subunits (MT-CYB, CYC1 and UQCRFS1), 2 core proteins (UQCRC1 and UQCRC2) and 6 low-molecular weight proteins (UQCRH/QCR6, UQCRB/QCR7, UQCRQ/QCR8, UQCR10/QCR9, UQCR11/QCR10 and a cleavage product of UQCRFS1). This cytochrome bc1 complex then forms a dimer. Heme b is required as a cofactor.

It localises to the mitochondrion inner membrane. Functionally, component of the ubiquinol-cytochrome c reductase complex (complex III or cytochrome b-c1 complex) that is part of the mitochondrial respiratory chain. The b-c1 complex mediates electron transfer from ubiquinol to cytochrome c. Contributes to the generation of a proton gradient across the mitochondrial membrane that is then used for ATP synthesis. The protein is Cytochrome b (MT-CYB) of Akodon aerosus (Highland grass mouse).